A 350-amino-acid polypeptide reads, in one-letter code: (S)-tetrahydroprotoberberine N-methyltransferase (350 aa).

S-adenosyl-L-methionine is bound by residues Ser-91, Gly-129, Asn-153, Gln-157, Asp-179, Val-180, and Val-195. Cys-325 is a catalytic residue.

The protein belongs to the CFA/CMAS family. In terms of assembly, homodimer.

The protein resides in the cytoplasm. It catalyses the reaction (S)-stylopine + S-adenosyl-L-methionine = (S)-cis-N-methylstylopine + S-adenosyl-L-homocysteine. It carries out the reaction (S)-tetrahydropalmatine + S-adenosyl-L-methionine = (S)-cis-N-methyltetrahydropalmatine + S-adenosyl-L-homocysteine. The enzyme catalyses (S)-canadine + S-adenosyl-L-methionine = (S)-cis-N-methylcanadine + S-adenosyl-L-homocysteine. The catalysed reaction is (S)-scoulerine + S-adenosyl-L-methionine = (S)-cis-N-methylscoulerine + S-adenosyl-L-homocysteine. It functions in the pathway alkaloid biosynthesis. In terms of biological role, N-methyltransferase with a broad substrate range, accepting protoberberine alkaloids (R,S)-stylopine, (R,S)-nandinine and (R,S)-tetrahydropalmatine, and to a lesser extent (R,S)-canadine, (R,S)-tetrahydrogroenlandicine (cheilanthifoline) and (S)-scoulerine. In Eschscholzia californica (California poppy), this protein is (S)-tetrahydroprotoberberine N-methyltransferase.